Consider the following 443-residue polypeptide: Ribulose bisphosphate carboxylase large chain (443 aa).

Substrate-binding residues include asparagine 89 and threonine 139. The Proton acceptor role is filled by lysine 141. Lysine 143 serves as a coordination point for substrate. Mg(2+) contacts are provided by lysine 167, aspartate 169, and glutamate 170. N6-carboxylysine is present on lysine 167. Catalysis depends on histidine 260, which acts as the Proton acceptor. Substrate contacts are provided by arginine 261, histidine 293, and serine 345.

The protein belongs to the RuBisCO large chain family. Type I subfamily. Heterohexadecamer of 8 large chains and 8 small chains; disulfide-linked. The disulfide link is formed within the large subunit homodimers. Mg(2+) serves as cofactor. The disulfide bond which can form in the large chain dimeric partners within the hexadecamer appears to be associated with oxidative stress and protein turnover.

Its subcellular location is the plastid. The protein resides in the chloroplast. The catalysed reaction is 2 (2R)-3-phosphoglycerate + 2 H(+) = D-ribulose 1,5-bisphosphate + CO2 + H2O. It carries out the reaction D-ribulose 1,5-bisphosphate + O2 = 2-phosphoglycolate + (2R)-3-phosphoglycerate + 2 H(+). Its function is as follows. RuBisCO catalyzes two reactions: the carboxylation of D-ribulose 1,5-bisphosphate, the primary event in carbon dioxide fixation, as well as the oxidative fragmentation of the pentose substrate in the photorespiration process. Both reactions occur simultaneously and in competition at the same active site. In Buddleja davidii (Butterfly bush), this protein is Ribulose bisphosphate carboxylase large chain.